Here is a 449-residue protein sequence, read N- to C-terminus: Glucose-6-phosphate isomerase (449 aa).

Residue Glu291 is the Proton donor of the active site. Active-site residues include His312 and Lys426.

This sequence belongs to the GPI family.

The protein localises to the cytoplasm. The catalysed reaction is alpha-D-glucose 6-phosphate = beta-D-fructose 6-phosphate. It participates in carbohydrate biosynthesis; gluconeogenesis. The protein operates within carbohydrate degradation; glycolysis; D-glyceraldehyde 3-phosphate and glycerone phosphate from D-glucose: step 2/4. Functionally, catalyzes the reversible isomerization of glucose-6-phosphate to fructose-6-phosphate. This chain is Glucose-6-phosphate isomerase, found in Clostridium botulinum (strain Alaska E43 / Type E3).